A 461-amino-acid chain; its full sequence is Argininosuccinate lyase (461 aa).

It belongs to the lyase 1 family. Argininosuccinate lyase subfamily.

It localises to the cytoplasm. The enzyme catalyses 2-(N(omega)-L-arginino)succinate = fumarate + L-arginine. It functions in the pathway amino-acid biosynthesis; L-arginine biosynthesis; L-arginine from L-ornithine and carbamoyl phosphate: step 3/3. This chain is Argininosuccinate lyase, found in Dehalococcoides mccartyi (strain ATCC BAA-2100 / JCM 16839 / KCTC 5957 / BAV1).